The chain runs to 519 residues: Putative thymidine phosphorylase (519 aa).

The protein belongs to the thymidine/pyrimidine-nucleoside phosphorylase family. Type 2 subfamily.

It carries out the reaction thymidine + phosphate = 2-deoxy-alpha-D-ribose 1-phosphate + thymine. This Maricaulis maris (strain MCS10) (Caulobacter maris) protein is Putative thymidine phosphorylase.